Consider the following 353-residue polypeptide: uncharacterized protein (353 aa).

Residues Asp-212, Asp-223, His-287, Glu-316, and Glu-330 each coordinate Mn(2+).

Belongs to the peptidase M24B family. Mn(2+) is required as a cofactor.

This is an uncharacterized protein from Bacillus subtilis (strain 168).